Reading from the N-terminus, the 203-residue chain is Late transcription elongation factor OPG110 (203 aa).

The span at 25–36 (KNSAENKDKNED) shows a compositional bias: basic and acidic residues. Disordered regions lie at residues 25–74 (KNSA…EVEE) and 80–99 (EYHQ…DIVE). Residues 49–67 (PKTKRATTPRKPAATKRST) are compositionally biased toward basic residues. Residues Thr-84 and Thr-85 each carry the phosphothreonine modification.

The protein belongs to the orthopoxvirus OPG110 family. Interacts with the DNA polymerase processivity factor A20. Interacts with B1R kinase. Interacts with the late transcription factors VLTF-1 and VLTF-3. Interacts with the late transcription elongation factor G2. Interacts with itself. Might be part of a transcription complex composed at least of G2, A18, and H5. Phosphorylated at multiple sites. Phosphorylation is necessary for cleavage activity. Phosphorylated by the viral B1R and F10 kinases.

It localises to the virion. The protein localises to the host cytoplasm. Involved in the co-transcriptional or post-transcriptional endoribonucleolytic cleavage that generates sequence-homogeneous 3' ends during late transcription. Involved in postreplicative transcription elongation on intermediate and late genes. Also involved in DNA replication and in multiple steps of virion morphogenesis. Required both for inclusion of virosoplasm into crescents as well as for maturation of immature virions (IV) into mature virions (MV). The polypeptide is Late transcription elongation factor OPG110 (OPG110) (Homo sapiens (Human)).